We begin with the raw amino-acid sequence, 200 residues long: 3-isopropylmalate dehydratase small subunit (200 aa).

The protein belongs to the LeuD family. LeuD type 1 subfamily. In terms of assembly, heterodimer of LeuC and LeuD.

The catalysed reaction is (2R,3S)-3-isopropylmalate = (2S)-2-isopropylmalate. Its pathway is amino-acid biosynthesis; L-leucine biosynthesis; L-leucine from 3-methyl-2-oxobutanoate: step 2/4. In terms of biological role, catalyzes the isomerization between 2-isopropylmalate and 3-isopropylmalate, via the formation of 2-isopropylmaleate. In Actinobacillus pleuropneumoniae serotype 7 (strain AP76), this protein is 3-isopropylmalate dehydratase small subunit.